A 2313-amino-acid polypeptide reads, in one-letter code: Voltage-dependent R-type calcium channel subunit alpha-1E (2313 aa).

Residues 1–38 are disordered; that stretch reads MARFGEAVVARPGSGDGDSDQSRNRQGTPVPASGQAAA. The Cytoplasmic portion of the chain corresponds to 1-89; the sequence is MARFGEAVVA…KYAKKLIDWP (89 aa). A phosphoserine mark is found at serine 14 and serine 19. One copy of the I repeat lies at 76–354; that stretch reads NIVRKYAKKL…LVLGVLSGEF (279 aa). A helical transmembrane segment spans residues 90-108; the sequence is PFEYMILATIIANCIVLAL. Topologically, residues 109–127 are extracellular; the sequence is EQHLPEDDKTPMSRRLEKT. The helical transmembrane segment at 128–146 threads the bilayer; it reads EPYFIGIFCFEAGIKIVAL. At 147 to 158 the chain is on the cytoplasmic side; sequence GFIFHKGSYLRN. A helical transmembrane segment spans residues 159–173; sequence GWNVMDFIVVLSGIL. Topologically, residues 174-185 are extracellular; the sequence is ATAGTHFNTHVD. The helical transmembrane segment at 186-205 threads the bilayer; sequence LRTLRAVRVLRPLKLVSGIP. The Cytoplasmic portion of the chain corresponds to 206-223; that stretch reads SLQIVLKSIMKAMVPLLQ. Residues 224–244 form a helical membrane-spanning segment; it reads IGLLLFFAILMFAIIGLEFYS. The Extracellular segment spans residues 245-326; that stretch reads GKLHRACFMN…NTNDALGATW (82 aa). A glycan (N-linked (GlcNAc...) asparagine) is linked at asparagine 254. Residues 327–350 traverse the membrane as a helical segment; sequence NWLYFIPLIIIGSFFVLNLVLGVL. Residues 351–476 are Cytoplasmic-facing; that stretch reads SGEFAKERER…ISIRHMVKSQ (126 aa). Residues 374–391 are binding to the beta subunit; sequence QQIERELNGYRAWIDKAE. Aspartate 426 provides a ligand contact to Ca(2+). A Phosphoserine modification is found at serine 427. Ca(2+)-binding residues include serine 428, glutamate 430, and cysteine 432. Threonine 440 is modified (phosphothreonine). An II repeat occupies 462 to 706; sequence ERLLRISIRH…VFLAIAVDNL (245 aa). The chain crosses the membrane as a helical span at residues 477-496; it reads VFYWIVLSLVALNTACVAIV. Residues 497–509 are Extracellular-facing; sequence HHNQPQWLTHLLY. The helical transmembrane segment at 510 to 529 threads the bilayer; that stretch reads YAEFLFLGLFLLEMSLKMYG. Over 530–538 the chain is Cytoplasmic; that stretch reads MGPRLYFHS. The helical transmembrane segment at 539–557 threads the bilayer; the sequence is SFNCFDFGVTVGSIFEVVW. The Extracellular portion of the chain corresponds to 558–567; the sequence is AIFRPGTSFG. A helical membrane pass occupies residues 568–586; the sequence is ISVLRALRLLRIFKITKYW. The Cytoplasmic segment spans residues 587–605; that stretch reads ASLRNLVVSLMSSMKSIIS. Residues 606-625 form a helical membrane-spanning segment; it reads LLFLLFLFIVVFALLGMQLF. Topologically, residues 626–678 are extracellular; the sequence is GGRFNFNDGTPSANFDTFPAAIMTVFQILTGEDWNEVMYNGIRSQGGVSSGMW. Residues 679–703 form a helical membrane-spanning segment; that stretch reads SAIYFIVLTLFGNYTLLNVFLAIAV. At 704-1148 the chain is on the cytoplasmic side; the sequence is DNLANAQELT…TNPIRRACHY (445 aa). A disordered region spans residues 729-774; the sequence is LQKAKEVSPMSAPNMPSIERDRRRRHHMSMWEPRSSHLRERRRRHH. Phosphoserine is present on residues serine 736, serine 745, serine 793, serine 815, and serine 855. Residues 851 to 984 form a disordered region; the sequence is SRGGSLKGDG…EERAQDLRRT (134 aa). A compositionally biased stretch (polar residues) spans 866–875; that stretch reads ALDNQRTPLS. A compositionally biased stretch (basic residues) spans 913–926; that stretch reads RHRQSQRRSRHRRV. Residues 933 to 945 are compositionally biased toward low complexity; that stretch reads SSSASRSRSASQE. Serine 947 carries the post-translational modification Phosphoserine. Residues 955-983 are compositionally biased toward basic and acidic residues; it reads EGEKDHELRGNHGAKEPTIQEERAQDLRR. Serine 1097 is modified (phosphoserine). Residues 1103–1125 form a disordered region; that stretch reads EIREDEEEVEKKKQKKEKRETGK. One copy of the III repeat lies at 1140–1426; the sequence is NPIRRACHYI…IFVALIIITF (287 aa). The chain crosses the membrane as a helical span at residues 1149 to 1165; that stretch reads IVNLRYFEMCILLVIAA. At 1166–1189 the chain is on the extracellular side; the sequence is SSIALAAEDPVLTNSERNKVLRYF. The helical transmembrane segment at 1190–1209 threads the bilayer; sequence DYVFTGVFTFEMVIKMIDQG. The Cytoplasmic portion of the chain corresponds to 1210–1217; that stretch reads LILQDGSY. A helical transmembrane segment spans residues 1218-1240; that stretch reads FRDLWNILDFVVVVGALVAFALA. Topologically, residues 1241 to 1254 are extracellular; sequence NALGTNKGRDIKTI. A helical membrane pass occupies residues 1255-1272; that stretch reads KSLRVLRVLRPLKTIKRL. Over 1273–1291 the chain is Cytoplasmic; it reads PKLKAVFDCVVTSLKNVFN. The helical transmembrane segment at 1292-1311 threads the bilayer; sequence ILIVYKLFMFIFAVIAVQLF. The Extracellular portion of the chain corresponds to 1312–1398; the sequence is KGKFFYCTDS…RGPSRSNRME (87 aa). The helical transmembrane segment at 1399-1422 threads the bilayer; it reads MSIFYVVYFVVFPFFFVNIFVALI. At 1423–1479 the chain is on the cytoplasmic side; sequence IITFQEQGDKMMEECSLEKNERACIDFAISAKPLTRYMPQNRHTFQYRVWHFVVSPS. An IV repeat occupies 1463 to 1726; that stretch reads NRHTFQYRVW…LFVAVIMDNF (264 aa). Residues 1480-1498 form a helical membrane-spanning segment; that stretch reads FEYTIMAMIALNTVVLMMK. Residues 1499–1513 lie on the Extracellular side of the membrane; sequence YYSAPCTYELALKYL. The chain crosses the membrane as a helical span at residues 1514 to 1533; the sequence is NIAFTMVFSLECVLKVIAFG. Over 1534–1541 the chain is Cytoplasmic; it reads FLNYFRDT. The helical transmembrane segment at 1542-1560 threads the bilayer; sequence WNIFDFITVIGSITEIILT. Over 1561–1571 the chain is Extracellular; sequence DSKLVNTSGFN. N-linked (GlcNAc...) asparagine glycans are attached at residues asparagine 1566 and asparagine 1571. A helical membrane pass occupies residues 1572–1590; it reads MSFLKLFRAARLIKLLRQG. Residues 1591–1609 are Cytoplasmic-facing; it reads YTIRILLWTFVQSFKALPY. Residues 1610-1629 form a helical membrane-spanning segment; sequence VCLLIAMLFFIYAIIGMQVF. Residues 1630 to 1698 are Extracellular-facing; it reads GNIKLDEESH…NENERCGTDL (69 aa). A helical membrane pass occupies residues 1699-1724; sequence AYVYFVSFIFFCSFLMLNLFVAVIMD. At 1725 to 2313 the chain is on the cytoplasmic side; the sequence is NFEYLTRDSS…LSDTEEDDKC (589 aa). In terms of domain architecture, EF-hand spans 1739 to 1774; the sequence is HHLDEFVRVWAEYDRAACGRIHYTEMYEMLTLMSPP. Residues aspartate 1752, arginine 1758, and glutamate 1763 each contribute to the Ca(2+) site. 3 disordered regions span residues 1970 to 2170, 2206 to 2225, and 2263 to 2295; these read VSEL…RPLL, CLTE…ASPQ, and SNTI…GPGM. Residues 2012–2023 are compositionally biased toward polar residues; that stretch reads TDPSSMRRSFST. Low complexity predominate over residues 2055-2064; it reads HSSLRLSAHR. The segment covering 2065–2085 has biased composition (basic and acidic residues); sequence LNSDSGHKSDTHRSGGRERGR. Phosphoserine occurs at positions 2094 and 2113. Over residues 2101-2118 the composition is skewed to basic and acidic residues; sequence NSEERGTQADWESPERRQ. Polar residues predominate over residues 2129–2152; it reads TPNRQGTGSLSESSIPSVSDTSTP. Positions 2210-2225 are enriched in low complexity; the sequence is SSNSPHPQQSQHASPQ.

This sequence belongs to the calcium channel alpha-1 subunit (TC 1.A.1.11) family. CACNA1E subfamily. Interacts with EFHC1. Voltage-dependent calcium channels are multisubunit complexes, consisting of alpha-1, alpha-2, beta and delta subunits in a 1:1:1:1 ratio. The channel activity is directed by the pore-forming and voltage-sensitive alpha-1 subunit. In many cases, this subunit is sufficient to generate voltage-sensitive calcium channel activity. The auxiliary subunits beta and alpha-2/delta linked by a disulfide bridge regulate the channel activity. Expressed in neuronal tissues and in kidney.

The protein localises to the membrane. It carries out the reaction Ca(2+)(in) = Ca(2+)(out). In terms of biological role, voltage-sensitive calcium channels (VSCC) mediate the entry of calcium ions into excitable cells. They are also involved in a variety of calcium-dependent processes, including muscle contraction, hormone or neurotransmitter release, gene expression, cell motility, cell division and cell death. The isoform alpha-1E gives rise to R-type calcium currents. R-type calcium channels belong to the 'high-voltage activated' (HVA) group and are blocked by nickel. They are however insensitive to dihydropyridines (DHP). Calcium channels containing alpha-1E subunit could be involved in the modulation of firing patterns of neurons which is important for information processing. Functionally, voltage-sensitive calcium channels (VSCC) mediate the entry of calcium ions into excitable cells. They are also involved in a variety of calcium-dependent processes, including muscle contraction, hormone or neurotransmitter release, gene expression, cell motility, cell division and cell death. The isoform alpha-1E gives rise to R-type calcium currents. This Homo sapiens (Human) protein is Voltage-dependent R-type calcium channel subunit alpha-1E (CACNA1E).